The chain runs to 154 residues: Small ribosomal subunit protein uS9 (154 aa).

The interval 135 to 154 (KESKKYGLKKARKAPQYSKR) is disordered. Residues 140 to 154 (YGLKKARKAPQYSKR) show a composition bias toward basic residues.

It belongs to the universal ribosomal protein uS9 family.

The chain is Small ribosomal subunit protein uS9 from Salinispora arenicola (strain CNS-205).